An 84-amino-acid polypeptide reads, in one-letter code: Dolichol phosphate-mannose biosynthesis regulatory protein (84 aa).

Helical transmembrane passes span 11–31 (FGLV…VILL) and 49–69 (YAVL…GLFI).

It belongs to the DPM2 family. In terms of assembly, component of the dolichol-phosphate mannose (DPM) synthase complex composed of DPM1, DPM2 and DPM3; in the complex interacts directly with DPM3. Component of the glycosylphosphatidylinositol-N-acetylglucosaminyltransferase (GPI-GnT) complex composed at least by PIGA, PIGC, PIGH, PIGP, PIGQ, PIGY and DPM2. Interacts with PIGA, PIGC and PIGQ.

The protein localises to the endoplasmic reticulum membrane. The protein operates within protein modification; protein glycosylation. Regulates the biosynthesis of dolichol phosphate-mannose. Regulatory subunit of the dolichol-phosphate mannose (DPM) synthase complex; essential for the ER localization and stable expression of DPM1. Part of the glycosylphosphatidylinositol-N-acetylglucosaminyltransferase (GPI-GnT) complex that catalyzes the transfer of N-acetylglucosamine from UDP-N-acetylglucosamine to phosphatidylinositol and participates in the first step of GPI biosynthesis. May act by regulating the GPI-GNT complex. The chain is Dolichol phosphate-mannose biosynthesis regulatory protein from Mus musculus (Mouse).